The following is a 322-amino-acid chain: Biotin synthase (322 aa).

One can recognise a Radical SAM core domain in the interval 39 to 266 (NQVQISSLLN…KSVVRLSAGR (228 aa)). Positions 54, 58, and 61 each coordinate [4Fe-4S] cluster. Residues cysteine 98, cysteine 129, cysteine 189, and arginine 261 each contribute to the [2Fe-2S] cluster site.

It belongs to the radical SAM superfamily. Biotin synthase family. As to quaternary structure, homodimer. Requires [4Fe-4S] cluster as cofactor. [2Fe-2S] cluster is required as a cofactor.

The enzyme catalyses (4R,5S)-dethiobiotin + (sulfur carrier)-SH + 2 reduced [2Fe-2S]-[ferredoxin] + 2 S-adenosyl-L-methionine = (sulfur carrier)-H + biotin + 2 5'-deoxyadenosine + 2 L-methionine + 2 oxidized [2Fe-2S]-[ferredoxin]. Its pathway is cofactor biosynthesis; biotin biosynthesis; biotin from 7,8-diaminononanoate: step 2/2. In terms of biological role, catalyzes the conversion of dethiobiotin (DTB) to biotin by the insertion of a sulfur atom into dethiobiotin via a radical-based mechanism. The polypeptide is Biotin synthase (Vesicomyosocius okutanii subsp. Calyptogena okutanii (strain HA)).